We begin with the raw amino-acid sequence, 486 residues long: MVHLGPKKPQARKGSMADVPKELMQQIENFEKIFTVPTETLQAVTKHFISELEKGLSKKGGNIPMIPGWVMDFPTGKESGDFLAIDLGGTNLRVVLVKLGGDRTFDTTQSKYRLPDAMRTTQNPDELWEFIADSLKAFIDEQFPQGISEPIPLGFTFSFPASQNKINEGILQRWTKGFDIPNIENHDVVPMLQKQITKRNIPIEVVALINDTTGTLVASYYTDPETKMGVIFGTGVNGAYYDVCSDIEKLQGKLSDDIPPSAPMAINCEYGSFDNEHVVLPRTKYDITIDEESPRPGQQTFEKMSSGYYLGEILRLALMDMYKQGFIFKNQDLSKFDKPFVMDTSYPARIEEDPFENLEDTDDLFQNEFGINTTVQERKLIRRLSELIGARAARLSVCGIAAICQKRGYKTGHIAADGSVYNRYPGFKEKAANALKDIYGWTQTSLDDYPIKIVPAEDGSGAGAAVIAALAQKRIAEGKSVGIIGA.

The residue at position 15 (serine 15) is a Phosphoserine. One can recognise a Hexokinase domain in the interval lysine 21 to alanine 469. Threonine 38 is subject to Phosphothreonine. Residues threonine 75–isoleucine 209 form a hexokinase small subdomain region. ATP is bound by residues aspartate 86–asparagine 91 and lysine 111. Phosphoserine is present on serine 158. Residues serine 158, threonine 175–lysine 176, asparagine 210–aspartate 211, and asparagine 237 each bind substrate. A hexokinase large subdomain region spans residues asparagine 210–aspartate 458. Residue serine 245 is modified to Phosphoserine. Residue glutamate 269 participates in substrate binding. Serine 272 is modified (phosphoserine). Glutamate 302 provides a ligand contact to substrate. ATP is bound by residues glycine 307–tyrosine 308, threonine 344–alanine 348, and serine 419–arginine 423.

Belongs to the hexokinase family. As to quaternary structure, homodimer.

It catalyses the reaction a D-hexose + ATP = a D-hexose 6-phosphate + ADP + H(+). The enzyme catalyses D-fructose + ATP = D-fructose 6-phosphate + ADP + H(+). It carries out the reaction D-glucose + ATP = D-glucose 6-phosphate + ADP + H(+). It functions in the pathway carbohydrate metabolism; hexose metabolism. Its pathway is carbohydrate degradation; glycolysis; D-glyceraldehyde 3-phosphate and glycerone phosphate from D-glucose: step 1/4. With respect to regulation, subject to allosteric control. Substrate inhibition by ATP. Its function is as follows. Catalyzes the phosphorylation of hexose, such as D-glucose and D-fructose, to hexose 6-phosphate (D-glucose 6-phosphate and D-fructose 6-phosphate, respectively). Mediates the initial step of glycolysis by catalyzing phosphorylation of D-glucose to D-glucose 6-phosphate. The sequence is that of Hexokinase-2 (HXK2) from Saccharomyces cerevisiae (strain ATCC 204508 / S288c) (Baker's yeast).